The sequence spans 246 residues: MLESEVSKQITTPLAAPAFPRGPYRFHNREYLNIIYRTDLDALRKIVPEPLELDRAYVRFEMMAMPDTTGLGSYTECGQAIPVKYNGVKGDYLHMMYLDNEPAIAVGRESSAYPKKLGYPKLFVDSDTLVGTLKYGTLPVATATMGYKHEPLDLKEAYAQIARPNFMLKIIQGYDGKPRICELICAENTDITIHGAWTGSARLQLFSHALAPLADLPVLEIVSASHILTDLTLGTPKVVHDYLSVK.

The active-site Schiff-base intermediate with acetoacetate is Lys115.

Belongs to the ADC family.

It carries out the reaction acetoacetate + H(+) = acetone + CO2. Catalyzes the conversion of acetoacetate to acetone and carbon dioxide. In Clostridium beijerinckii (strain ATCC 51743 / NCIMB 8052) (Clostridium acetobutylicum), this protein is Acetoacetate decarboxylase.